Reading from the N-terminus, the 422-residue chain is Protein krasavietz (422 aa).

Residues Met-1–Tyr-26 form a disordered region. Positions Lys-244 to Glu-415 constitute a W2 domain. Phosphoserine occurs at positions 407, 412, and 414.

Belongs to the BZW family. As to expression, expressed in mushroom bodies.

Functionally, may be involved in memory formation. This is Protein krasavietz (kra) from Drosophila melanogaster (Fruit fly).